The primary structure comprises 121 residues: MARIAGIDLPRDKRVEIALTYIYGIGLTRAQNILAKTGVNPDIRVKDLEDGDVQKLRAATESFTIEGDLRRQEGMALKRLQDIGCLRGRRHRMSLPVRGQRTRTNARTRRGSRKTVAGRKK.

The tract at residues 91 to 121 is disordered; that stretch reads HRMSLPVRGQRTRTNARTRRGSRKTVAGRKK. Over residues 100-121 the composition is skewed to basic residues; sequence QRTRTNARTRRGSRKTVAGRKK.

Belongs to the universal ribosomal protein uS13 family. In terms of assembly, part of the 30S ribosomal subunit. Forms a loose heterodimer with protein S19. Forms two bridges to the 50S subunit in the 70S ribosome.

Its function is as follows. Located at the top of the head of the 30S subunit, it contacts several helices of the 16S rRNA. In the 70S ribosome it contacts the 23S rRNA (bridge B1a) and protein L5 of the 50S subunit (bridge B1b), connecting the 2 subunits; these bridges are implicated in subunit movement. Contacts the tRNAs in the A and P-sites. This chain is Small ribosomal subunit protein uS13, found in Prochlorococcus marinus (strain SARG / CCMP1375 / SS120).